The sequence spans 563 residues: Testis-expressed basic protein 1 (563 aa).

A helical membrane pass occupies residues 3 to 23; the sequence is VLEITLAVILTLLGLAILAIL. A disordered region spans residues 56–81; sequence GSRHAYSTQSDTSYDNRERSKRDYTP. Basic and acidic residues predominate over residues 69–79; it reads YDNRERSKRDY. The helical transmembrane segment at 99–119 threads the bilayer; sequence ELILLLMCFILALSRSSIGSI. Positions 311–563 are disordered; the sequence is SEMSIPQGQG…GRKYNKKVEE (253 aa). Residues 367-383 are compositionally biased toward basic and acidic residues; that stretch reads QVEKSEMGVPRRQESQV. The span at 384–395 shows a compositional bias: low complexity; it reads KKSQSGVSKGQE. Composition is skewed to basic and acidic residues over residues 412 to 447 and 485 to 544; these read QVEK…KKSE and EAQE…EKSK.

The protein localises to the membrane. This is Testis-expressed basic protein 1 from Homo sapiens (Human).